The primary structure comprises 819 residues: DNA topoisomerase 4 subunit A (819 aa).

One can recognise a Topo IIA-type catalytic domain in the interval 30–496; the sequence is LPDIRDGLKP…QIIEIDTASL (467 aa). The active-site O-(5'-phospho-DNA)-tyrosine intermediate is the Tyr-118.

Belongs to the type II topoisomerase GyrA/ParC subunit family. ParC type 2 subfamily. As to quaternary structure, heterotetramer composed of ParC and ParE.

The protein resides in the cell membrane. It carries out the reaction ATP-dependent breakage, passage and rejoining of double-stranded DNA.. Topoisomerase IV is essential for chromosome segregation. It relaxes supercoiled DNA. Performs the decatenation events required during the replication of a circular DNA molecule. The polypeptide is DNA topoisomerase 4 subunit A (Streptococcus pyogenes serotype M3 (strain SSI-1)).